The chain runs to 203 residues: Akirin-2 (203 aa).

Phosphoserine is present on residues Ser18 and Ser21. The Nuclear localization signal signature appears at 22–27; sequence PKRRRC. Position 57 is a phosphoserine (Ser57). The segment at 115 to 137 is disordered; that stretch reads PHAFLLSGPASPGTPSGTSSPLK. Residues 119-135 are compositionally biased toward low complexity; that stretch reads LLSGPASPGTPSGTSSP. The SYVS motif motif lies at 200 to 203; sequence SYVS.

This sequence belongs to the akirin family. Homodimer. Interacts with IPO9; the interaction is direct. Associates with 20S and 26S proteasomes. Interacts with SMARCD1; promoting SWI/SNF complex recruitment. Interacts with NFKBIZ. Interacts with YWHAB. Post-translationally, polyubiquitinated. Polyubiquitination is dependent of UBR5 that extends pre-ubiquitinated AKIRIN2.

It localises to the nucleus. It is found in the cytoplasm. The protein resides in the membrane. Its function is as follows. Molecular adapter that acts as a bridge between a variety of multiprotein complexes, and which is involved in embryonic development, immunity, myogenesis and brain development. Plays a key role in nuclear protein degradation by promoting import of proteasomes into the nucleus: directly binds to fully assembled 20S proteasomes at one end and to nuclear import receptor IPO9 at the other end, bridging them together and mediating the import of pre-assembled proteasome complexes through the nuclear pore. Involved in innate immunity by regulating the production of interleukin-6 (IL6) downstream of Toll-like receptor (TLR): acts by bridging the NF-kappa-B inhibitor NFKBIZ and the SWI/SNF complex, leading to promote induction of IL6. Also involved in adaptive immunity by promoting B-cell activation. Involved in brain development: required for the survival and proliferation of cerebral cortical progenitor cells. Involved in myogenesis: required for skeletal muscle formation and skeletal development, possibly by regulating expression of muscle differentiation factors. This Bos taurus (Bovine) protein is Akirin-2.